Here is a 530-residue protein sequence, read N- to C-terminus: Protein SLOW WALKER 1 (530 aa).

7 WD repeats span residues 50–89, 91–130, 133–173, 176–216, 220–258, 262–304, and 320–363; these read NLVS…SSRR, SFRD…ALRT, SHSA…VISD, GHKD…SNWI, NHGL…KMVC, SHNK…VTYS, and GSTR…DESR. Positions 392–399 match the Nuclear localization signal motif; sequence EKKGLKLT.

As to expression, expressed in cells undergoing active cell divisions, including functional megaspores and the female gametophytic cells. Accumulates in roots, stems, leaves, inflorescences and siliques.

It is found in the nucleus. The protein resides in the nucleolus. Essential protein required for nuclear division and organization during embryo sac development in female gametophyte, probably by promoting rRNA biogenesis essential for the progression of the mitotic division cycles during gametogenesis. Involved in nucleolar processing of pre-18S ribosomal RNA. The protein is Protein SLOW WALKER 1 of Arabidopsis thaliana (Mouse-ear cress).